Consider the following 1391-residue polypeptide: ESX-5 secretion system protein EccC5 (1391 aa).

2 helical membrane-spanning segments follow: residues 38–58 and 65–85; these read WLIV…AMVF and FGGI…MMMF. 3 FtsK domains span residues 476–678, 858–1052, and 1161–1354; these read GELL…GAAQ, QPPW…EDAK, and LAPV…DPDE. Residues 499-506, 876-883, and 1178-1185 contribute to the ATP site; these read GTTGSGKS, GAGGSGKT, and GRRECGRT.

In terms of assembly, part of the ESX-5 / type VII secretion system (T7SS), which is composed of cytosolic and membrane components. The ESX-5 membrane complex is composed of EccB5, EccC5, EccD5 and EccE5.

Its subcellular location is the cell inner membrane. Its function is as follows. Part of the ESX-5 specialized secretion system, which is responsible for the secretion of EsxN and a number of PE_PGRS and PPE proteins, including PPE41. The protein is ESX-5 secretion system protein EccC5 of Mycobacterium tuberculosis (strain CDC 1551 / Oshkosh).